A 349-amino-acid chain; its full sequence is MAELLAIKWDDNRDKLILLDQTILPNKIEYIEYDTAEGVYDSIKDMIVRGAPAIGVTAAYGLYFAAKVAPEDKFEGFFKYLKEKSAYLDSSRPTAVNLSWALKVMESKALENKDKDVKEIKSILREEAKRIHEEDIEICKTIGENLITLLKDGVGILTHCNAGQLATSKYGTATSPMYLAKEKGWNFKVYSDETRPRLQGSTLTALELYEAGIDVTTITDNMAAMVMSQGKIDAVIVGCDRIAANGDTANKIGTMGVSILAKYFGIPMYIAAPTPSIDINTKTGEDIPIEERNSEEVTSRFGVWTAPKGVKVYNPGFDVTPHENITAIVTEKGIVYPPFKENLKKLFEK.

Residues 49 to 51 (RGA), R92, and Q199 each bind substrate. The Proton donor role is filled by D240. 250–251 (NK) lines the substrate pocket.

It belongs to the EIF-2B alpha/beta/delta subunits family. DrdI subfamily.

The enzyme catalyses 5-deoxy-alpha-D-ribose 1-phosphate = 5-deoxy-D-ribulose 1-phosphate. Its pathway is carbohydrate degradation. Functionally, catalyzes the isomerization of 5-deoxy-alpha-D-ribose 1-phosphate to 5-deoxy-D-ribulose 1-phosphate, as part of a 5-deoxyribose salvage pathway that recycles this toxic radical SAM enzyme by-product to mainstream metabolites. This is 5-deoxyribose 1-phosphate isomerase from Clostridium botulinum (strain Langeland / NCTC 10281 / Type F).